A 251-amino-acid polypeptide reads, in one-letter code: Ubiquinone/menaquinone biosynthesis C-methyltransferase UbiE (251 aa).

S-adenosyl-L-methionine is bound by residues T74, D95, 123–124, and S140; that span reads NA.

This sequence belongs to the class I-like SAM-binding methyltransferase superfamily. MenG/UbiE family.

It carries out the reaction a 2-demethylmenaquinol + S-adenosyl-L-methionine = a menaquinol + S-adenosyl-L-homocysteine + H(+). The enzyme catalyses a 2-methoxy-6-(all-trans-polyprenyl)benzene-1,4-diol + S-adenosyl-L-methionine = a 5-methoxy-2-methyl-3-(all-trans-polyprenyl)benzene-1,4-diol + S-adenosyl-L-homocysteine + H(+). The protein operates within quinol/quinone metabolism; menaquinone biosynthesis; menaquinol from 1,4-dihydroxy-2-naphthoate: step 2/2. Its pathway is cofactor biosynthesis; ubiquinone biosynthesis. Functionally, methyltransferase required for the conversion of demethylmenaquinol (DMKH2) to menaquinol (MKH2) and the conversion of 2-polyprenyl-6-methoxy-1,4-benzoquinol (DDMQH2) to 2-polyprenyl-3-methyl-6-methoxy-1,4-benzoquinol (DMQH2). This is Ubiquinone/menaquinone biosynthesis C-methyltransferase UbiE from Enterobacter sp. (strain 638).